Reading from the N-terminus, the 583-residue chain is Aspartate--tRNA ligase (583 aa).

Glutamate 169 contributes to the L-aspartate binding site. Positions 193 to 196 (QLFK) are aspartate. Arginine 215 is an L-aspartate binding site. ATP-binding positions include 215–217 (RDE) and glutamine 224. Position 443 (histidine 443) interacts with L-aspartate. Glutamate 477 contributes to the ATP binding site. Arginine 484 lines the L-aspartate pocket. 529–532 (GIDR) contributes to the ATP binding site.

This sequence belongs to the class-II aminoacyl-tRNA synthetase family. Type 1 subfamily. As to quaternary structure, homodimer.

The protein resides in the cytoplasm. It carries out the reaction tRNA(Asp) + L-aspartate + ATP = L-aspartyl-tRNA(Asp) + AMP + diphosphate. In terms of biological role, catalyzes the attachment of L-aspartate to tRNA(Asp) in a two-step reaction: L-aspartate is first activated by ATP to form Asp-AMP and then transferred to the acceptor end of tRNA(Asp). The protein is Aspartate--tRNA ligase of Stenotrophomonas maltophilia (strain K279a).